The primary structure comprises 254 residues: Probable membrane transporter protein YjnA (254 aa).

6 consecutive transmembrane segments (helical) span residues 5-25 (IILMGLFVGALVGLTGVGGAA), 75-95 (AIGSIPSASLAIGILHLFPAF), 105-125 (HALGYVLTLVAISIIVRLFLD), 143-163 (ALTILIGVVFGFIVGLTSIGS), 187-207 (IAHAFLLVTAAGILNASFGSV), and 209-229 (YMLAANLLLGSIPGVLIGSHL).

It belongs to the 4-toluene sulfonate uptake permease (TSUP) (TC 2.A.102) family.

Its subcellular location is the cell membrane. This Bacillus subtilis (strain 168) protein is Probable membrane transporter protein YjnA (yjnA).